The sequence spans 683 residues: Multidrug resistance protein MdtO (683 aa).

Transmembrane regions (helical) follow at residues 43-63, 75-95, 100-120, 125-145, 158-178, 402-422, 426-446, 457-477, and 483-503; these read VILI…AVLF, FVAI…FLIY, GEPL…MFLM, LGLV…FPAM, WCIV…VLWF, FGGA…VMPW, IVEL…IATS, MVVT…YDLV, and ALGI…VWPE.

The protein belongs to the MdtO family. As to quaternary structure, could be part of a tripartite efflux system composed of MdtN, MdtO and MdtP.

It localises to the cell inner membrane. Could be involved in resistance to puromycin, acriflavine and tetraphenylarsonium chloride. The polypeptide is Multidrug resistance protein MdtO (mdtO) (Escherichia coli (strain K12)).